Here is a 908-residue protein sequence, read N- to C-terminus: DNA polymerase I (908 aa).

The region spanning 1–318 (MKELYLIDAL…DDINTIDTEN (318 aa)) is the 5'-3' exonuclease domain. Residues 319-531 (VKYRSITTKI…MEENGIYLDK (213 aa)) enclose the 3'-5' exonuclease domain. The interval 532 to 908 (EYLKEYGKEL…ETGKSWGEIH (377 aa)) is polymerase.

The protein belongs to the DNA polymerase type-A family.

It catalyses the reaction DNA(n) + a 2'-deoxyribonucleoside 5'-triphosphate = DNA(n+1) + diphosphate. Its function is as follows. In addition to polymerase activity, this DNA polymerase exhibits 3'-5' and 5'-3' exonuclease activity. In Borreliella burgdorferi (strain ATCC 35210 / DSM 4680 / CIP 102532 / B31) (Borrelia burgdorferi), this protein is DNA polymerase I (polA).